Consider the following 322-residue polypeptide: Ferredoxin--NADP reductase (322 aa).

Positions 34, 42, 47, 87, 120, 279, and 320 each coordinate FAD.

It belongs to the ferredoxin--NADP reductase type 2 family. Homodimer. The cofactor is FAD.

It catalyses the reaction 2 reduced [2Fe-2S]-[ferredoxin] + NADP(+) + H(+) = 2 oxidized [2Fe-2S]-[ferredoxin] + NADPH. This is Ferredoxin--NADP reductase from Streptococcus gordonii (strain Challis / ATCC 35105 / BCRC 15272 / CH1 / DL1 / V288).